Here is a 332-residue protein sequence, read N- to C-terminus: MKTLGEFIVEKQHEFSQATGELTALLSAIKLGAKIIHRDINKAGLVDILGASCAENVQGEVQQKLDLFANEKLKAALKARDIVAGIASEEEDEIVVFEGCEHAKYVVLMDPLDGSSNIDVNVSVGTIFSIYRRVTPVGTPVTEEDFLQPGNKQVAAGYVVYGSSTMLIYTTGCGVHAFTYDPSLGVFCLCQERMRFPEKGKTYSINEGNYIKFPNGVKKYIKFCQEEDSSTSRPYTSRYIGSLVADFHRNLLKGGIYLYPSTASHPQGKLRLLYECNPMAFLAEQAGGKASDGKERILDIIPESLHQRRSFFVGNRHMVDDVERFIREYPDA.

Residues Glu-89, Asp-110, Leu-112, and Asp-113 each coordinate Mg(2+). Substrate contacts are provided by residues 113–116, Asn-206, Tyr-239, 257–259, and Lys-269; these read DGSS and YLY. A Mg(2+)-binding site is contributed by Glu-275.

It belongs to the FBPase class 1 family. In terms of assembly, homotetramer. Requires Mg(2+) as cofactor.

It is found in the cytoplasm. It carries out the reaction beta-D-fructose 1,6-bisphosphate + H2O = beta-D-fructose 6-phosphate + phosphate. It functions in the pathway carbohydrate biosynthesis; gluconeogenesis. The sequence is that of Fructose-1,6-bisphosphatase class 1 from Salmonella typhi.